We begin with the raw amino-acid sequence, 471 residues long: Alpha-galactosidase (471 aa).

The first 18 residues, 1–18 (MFNLNFFNYTCHCEWCFW), serve as a signal peptide directing secretion. Cys42 and Cys74 form a disulfide bridge. Residue Asn43 is glycosylated (N-linked (GlcNAc...) asparagine). Residues Asp72 and Asp73 each coordinate substrate. The N-linked (GlcNAc...) asparagine glycan is linked to Asn105. A disulfide bond links Cys121 and Cys151. Residue Lys147 participates in substrate binding. Asp149 functions as the Nucleophile in the catalytic mechanism. An N-linked (GlcNAc...) asparagine glycan is attached at Asn175. Position 205 (Arg205) interacts with substrate. Catalysis depends on Asp209, which acts as the Proton donor. 2 disulfide bridges follow: Cys221/Cys237 and Cys223/Cys230. Substrate is bound at residue Gln251. N-linked (GlcNAc...) asparagine glycans are attached at residues Asn270, Asn370, Asn403, Asn417, Asn422, and Asn454.

This sequence belongs to the glycosyl hydrolase 27 family. As to quaternary structure, homotetramer.

Its subcellular location is the secreted. It carries out the reaction Hydrolysis of terminal, non-reducing alpha-D-galactose residues in alpha-D-galactosides, including galactose oligosaccharides, galactomannans and galactolipids.. The protein is Alpha-galactosidase (MEL) of Saccharomyces paradoxus (Yeast).